Reading from the N-terminus, the 177-residue chain is Isopentenyl-diphosphate Delta-isomerase 1 (177 aa).

Positions 24 and 30 each coordinate Mn(2+). The Nudix hydrolase domain maps to 28 to 160 (SLHRAISIFI…PHAYSFWLEA (133 aa)). The active site involves C65. Mg(2+) is bound at residue C65. Mn(2+) is bound at residue H67. E85 is a Mg(2+) binding site. Residues E110 and E112 each contribute to the Mn(2+) site. The active site involves E112.

This sequence belongs to the IPP isomerase type 1 family. Mg(2+) serves as cofactor. Mn(2+) is required as a cofactor.

Its subcellular location is the cytoplasm. It carries out the reaction isopentenyl diphosphate = dimethylallyl diphosphate. It participates in isoprenoid biosynthesis; dimethylallyl diphosphate biosynthesis; dimethylallyl diphosphate from isopentenyl diphosphate: step 1/1. In terms of biological role, catalyzes the 1,3-allylic rearrangement of the homoallylic substrate isopentenyl (IPP) to its highly electrophilic allylic isomer, dimethylallyl diphosphate (DMAPP). The sequence is that of Isopentenyl-diphosphate Delta-isomerase 1 from Aromatoleum aromaticum (strain DSM 19018 / LMG 30748 / EbN1) (Azoarcus sp. (strain EbN1)).